A 707-amino-acid polypeptide reads, in one-letter code: Polyribonucleotide nucleotidyltransferase (707 aa).

Residues aspartate 486 and aspartate 492 each contribute to the Mg(2+) site. The region spanning 553–612 (PTVTTLRVLPDKIPIIIGPAGKNIKKIIEETKVKIDLDPEGLVKIYATSKEAAEKAVSMI) is the KH domain. The 69-residue stretch at 622–690 (GEVYMGKVTR…DQGRIKVSLK (69 aa)) folds into the S1 motif domain.

The protein belongs to the polyribonucleotide nucleotidyltransferase family. Mg(2+) is required as a cofactor.

Its subcellular location is the cytoplasm. The catalysed reaction is RNA(n+1) + phosphate = RNA(n) + a ribonucleoside 5'-diphosphate. Functionally, involved in mRNA degradation. Catalyzes the phosphorolysis of single-stranded polyribonucleotides processively in the 3'- to 5'-direction. This is Polyribonucleotide nucleotidyltransferase from Sulfurihydrogenibium azorense (strain DSM 15241 / OCM 825 / Az-Fu1).